A 302-amino-acid chain; its full sequence is Segregation and condensation protein A (302 aa).

Belongs to the ScpA family. As to quaternary structure, component of a cohesin-like complex composed of ScpA, ScpB and the Smc homodimer, in which ScpA and ScpB bind to the head domain of Smc. The presence of the three proteins is required for the association of the complex with DNA.

The protein resides in the cytoplasm. Functionally, participates in chromosomal partition during cell division. May act via the formation of a condensin-like complex containing Smc and ScpB that pull DNA away from mid-cell into both cell halves. The polypeptide is Segregation and condensation protein A (Xylella fastidiosa (strain Temecula1 / ATCC 700964)).